A 284-amino-acid chain; its full sequence is Pantothenate synthetase (284 aa).

31–38 lines the ATP pocket; that stretch reads MGNLHAGH. Catalysis depends on histidine 38, which acts as the Proton donor. Glutamine 62 serves as a coordination point for (R)-pantoate. A beta-alanine-binding site is contributed by glutamine 62. 150–153 lines the ATP pocket; sequence GKKD. (R)-pantoate is bound at residue glutamine 156. ATP-binding positions include valine 179 and 187–190; that span reads MSSR.

The protein belongs to the pantothenate synthetase family. In terms of assembly, homodimer.

Its subcellular location is the cytoplasm. The catalysed reaction is (R)-pantoate + beta-alanine + ATP = (R)-pantothenate + AMP + diphosphate + H(+). It participates in cofactor biosynthesis; (R)-pantothenate biosynthesis; (R)-pantothenate from (R)-pantoate and beta-alanine: step 1/1. Functionally, catalyzes the condensation of pantoate with beta-alanine in an ATP-dependent reaction via a pantoyl-adenylate intermediate. This is Pantothenate synthetase from Xanthomonas campestris pv. campestris (strain 8004).